A 308-amino-acid polypeptide reads, in one-letter code: Electron transfer flavoprotein subunit alpha (308 aa).

252-280 serves as a coordination point for FAD; sequence LYVAVGISGAIQHLAGMKDSKVIVAINKD.

This sequence belongs to the ETF alpha-subunit/FixB family. Heterodimer of an alpha and a beta subunit. It depends on FAD as a cofactor.

The electron transfer flavoprotein serves as a specific electron acceptor for other dehydrogenases. It transfers the electrons to the main respiratory chain via ETF-ubiquinone oxidoreductase (ETF dehydrogenase). The polypeptide is Electron transfer flavoprotein subunit alpha (etfA) (Paracoccus denitrificans).